The sequence spans 445 residues: FAS-associated factor 2 (445 aa).

At Ala-2 the chain carries N-acetylalanine. Residues 12-48 enclose the UBA domain; that stretch reads EQTEKLLQFQDLTGIESMDQCRHTLEQHNWNIEAAVQ. An N6-acetyllysine modification is found at Lys-167. A coiled-coil region spans residues 275-350; the sequence is SERLEREERN…EEKERKLECL (76 aa). The interval 299-361 is disordered; sequence ASLRADQEKE…PEPSPDDPES (63 aa). Over residues 303-348 the composition is skewed to basic and acidic residues; it reads ADQEKERKKREERERKRRKEEEVQQQKLAEERRRQNLQEEKERKLE. Residues 357–439 enclose the UBX domain; that stretch reads DDPESVKIIF…GLSHTEVLFV (83 aa).

In terms of assembly, identified in a complex that contains SEL1L, OS9, FAF2/UBXD8, UBE2J1/UBC6E and AUP1. Interacts with YOD1. Interacts (via N-terminus) with UBQLN2 (via C-terminus). Interacts with PNPLA2 and UBAC2. Interacts with ZFAND2B; probably through VCP. Interacts with LMBR1L. Broadly expressed, with highest levels in brain.

It is found in the cytoplasm. The protein localises to the lipid droplet. The protein resides in the endoplasmic reticulum. Its function is as follows. Plays an important role in endoplasmic reticulum-associated degradation (ERAD) that mediates ubiquitin-dependent degradation of misfolded endoplasmic reticulum proteins. By controlling the steady-state expression of the IGF1R receptor, indirectly regulates the insulin-like growth factor receptor signaling pathway. Involved in inhibition of lipid droplet degradation by binding to phospholipase PNPL2 and inhibiting its activity by promoting dissociation of PNPL2 from its endogenous activator, ABHD5 which inhibits the rate of triacylglycerol hydrolysis. Involved in stress granule disassembly: associates with ubiquitinated G3BP1 in response to heat shock, thereby promoting interaction between ubiquitinated G3BP1 and VCP, followed by G3BP1 extraction from stress granules and stress granule disassembly. In Homo sapiens (Human), this protein is FAS-associated factor 2.